Consider the following 166-residue polypeptide: Bacterial microcompartment shell protein EutK (166 aa).

Positions 4 to 88 (ALGLLEVDGM…PDDDTQWLVT (85 aa)) constitute a BMC domain. The EutK-Ctail domain maps to 109–165 (ESADELLALLTSVRQGMTAGEVAAHFGWPLEKARNALEQLFSAGTLRKRSSRYRLKP).

This sequence belongs to the bacterial microcompartments protein family. Monomeric in solution.

Its subcellular location is the bacterial microcompartment. Its pathway is amine and polyamine degradation; ethanolamine degradation. In terms of biological role, probably a minor component of the bacterial microcompartment (BMC) shell dedicated to ethanolamine degradation. It might bind nucleic acids. This is Bacterial microcompartment shell protein EutK (eutK) from Escherichia coli (strain K12).